We begin with the raw amino-acid sequence, 66 residues long: Large ribosomal subunit protein bL33c (66 aa).

This sequence belongs to the bacterial ribosomal protein bL33 family.

Its subcellular location is the plastid. The protein resides in the chloroplast. The polypeptide is Large ribosomal subunit protein bL33c (Acorus calamus (Sweet flag)).